Here is a 676-residue protein sequence, read N- to C-terminus: RNA helicase NPH-II (676 aa).

In terms of domain architecture, Helicase ATP-binding spans 172-347 (FSAWISHRPV…VFLPNPAFIH (176 aa)). Residue 185 to 192 (GGTGVGKT) coordinates ATP. The DEXH box signature appears at 296–299 (DEVH). In terms of domain architecture, Helicase C-terminal spans 366-535 (NPSSRMAYIE…NYILYANKFN (170 aa)).

It belongs to the DEAD box helicase family. DEAH subfamily. In terms of assembly, monomer.

The protein localises to the virion. The enzyme catalyses ATP + H2O = ADP + phosphate + H(+). NTP-dependent helicase that catalyzes unidirectional unwinding of 3'tailed duplex RNAs and plays an important role during transcription of early mRNAs, presumably by preventing R-loop formation behind the elongating RNA polymerase. Might also play a role in the export of newly synthesized mRNA chains out of the core into the cytoplasm. Required for replication and propagation of viral particles. The protein is RNA helicase NPH-II (OPG084) of Vaccinia virus (strain Copenhagen) (VACV).